Reading from the N-terminus, the 433-residue chain is MDAPLTDAERTALQTSLEALNRQVEATRNILRSNSQKALLQTLHTDQELPDPALEALAGKTINLLHETQQLLEPGHLVLADHFLGYVSTKCLCAAVELKLVDILADADEAGMTVDELADASGAHPDRLQQVLRVLRNDNIFDYDAVSHRYRNNRVSALLHSEHWTQWHNWVDLYGNEFYDIARGIPRSIRREEARWAAQINFDTNDDMFTYFQAQGWLPRLHRTLGGGAIAQAPGIVADYPWHEIGSRTVLDVGGGGGGFLASLLREYPQMRGGILDLPRTIEHACTLFHEPQGPYFDLRERVPRENLIAGDFLKAVPAFEIYTMKWVLHDWKDPDVLTILRCIRASLIPGPDSRLVILESNLSDGQMGRLSRYGDINMMMTANGQERSEEQWRALAAASGWEVSRIYPMRRAWVCAIDLRPSASESGDRKHS.

The stretch at 5-37 (LTDAERTALQTSLEALNRQVEATRNILRSNSQK) forms a coiled coil. Residues aspartate 277 and 311-313 (GDF) contribute to the S-adenosyl-L-methionine site. The active-site Proton acceptor is the histidine 330.

Belongs to the class I-like SAM-binding methyltransferase superfamily. Cation-independent O-methyltransferase family. COMT subfamily.

It functions in the pathway mycotoxin biosynthesis. In terms of biological role, O-methyltransferase; part of the gene cluster that mediates the biosynthesis of aspirochlorine (or antibiotic A30641), an unusual halogenated spiro compound with distinctive antifungal properties due to selective inhibition of protein biosynthesis, and which is also active against bacteria, viruses, and murine tumor cells. The non-ribosomal peptide synthetase (NRPS) aclP is responsible the formation of the diketopiperazine (DKP) core from the condensation of 2 phenylalanine residues. One Phe residue is tailored into chlorotyrosine by hydroxylation and chlorination, whereas the second Phe undergoes an unprecedented C-C bond cleavage to be converted into glycine. After formation of the DKP, sulfur is incorporated into the DKP by conjugation with glutathione by aclG, followed by its stepwise degradation to the thiol by aclI, aclJ and aclK, and the dithiol oxidation by aclT. In addition, oxygenases (aclB, aclC, aclL and aclO) and O-methyltransferases (aclM and aclU) act as tailoring enzymes to produce the intermediate dechloroaspirochlorine. Ultimately, chlorination of dechloroaspirochlorine by the halogenase aclH is the last step in the aspirochlorine pathway. In Aspergillus oryzae (strain ATCC 42149 / RIB 40) (Yellow koji mold), this protein is O-methyltransferase aclM.